Reading from the N-terminus, the 343-residue chain is Ferredoxin--NADP reductase (343 aa).

C18, D37, Q45, Y50, V90, F125, D290, and T331 together coordinate FAD.

The protein belongs to the ferredoxin--NADP reductase type 2 family. In terms of assembly, homodimer. The cofactor is FAD.

It catalyses the reaction 2 reduced [2Fe-2S]-[ferredoxin] + NADP(+) + H(+) = 2 oxidized [2Fe-2S]-[ferredoxin] + NADPH. This is Ferredoxin--NADP reductase from Parvibaculum lavamentivorans (strain DS-1 / DSM 13023 / NCIMB 13966).